The sequence spans 338 residues: Anthranilate phosphoribosyltransferase (338 aa).

5-phospho-alpha-D-ribose 1-diphosphate-binding positions include Gly-81, 84–85 (GD), Thr-89, 91–94 (NIST), 109–117 (KHGNRALSS), and Ala-121. An anthranilate-binding site is contributed by Gly-81. Ser-93 serves as a coordination point for Mg(2+). Residue Asn-112 participates in anthranilate binding. Arg-167 provides a ligand contact to anthranilate. 2 residues coordinate Mg(2+): Asp-225 and Glu-226.

Belongs to the anthranilate phosphoribosyltransferase family. As to quaternary structure, homodimer. Mg(2+) serves as cofactor.

It carries out the reaction N-(5-phospho-beta-D-ribosyl)anthranilate + diphosphate = 5-phospho-alpha-D-ribose 1-diphosphate + anthranilate. It functions in the pathway amino-acid biosynthesis; L-tryptophan biosynthesis; L-tryptophan from chorismate: step 2/5. Its function is as follows. Catalyzes the transfer of the phosphoribosyl group of 5-phosphorylribose-1-pyrophosphate (PRPP) to anthranilate to yield N-(5'-phosphoribosyl)-anthranilate (PRA). In Rhizobium etli (strain ATCC 51251 / DSM 11541 / JCM 21823 / NBRC 15573 / CFN 42), this protein is Anthranilate phosphoribosyltransferase.